The chain runs to 254 residues: Ribonuclease HII (254 aa).

Residues 70-254 (RYICGIDEVG…ASFIKNLTSC (185 aa)) enclose the RNase H type-2 domain. Residues Asp76, Glu77, and Asp168 each coordinate a divalent metal cation.

This sequence belongs to the RNase HII family. It depends on Mn(2+) as a cofactor. Requires Mg(2+) as cofactor.

The protein localises to the cytoplasm. It catalyses the reaction Endonucleolytic cleavage to 5'-phosphomonoester.. Its function is as follows. Endonuclease that specifically degrades the RNA of RNA-DNA hybrids. The polypeptide is Ribonuclease HII (Lachnoclostridium phytofermentans (strain ATCC 700394 / DSM 18823 / ISDg) (Clostridium phytofermentans)).